Consider the following 348-residue polypeptide: Dihydroorotase (348 aa).

Positions 14 and 16 each coordinate Zn(2+). Residues 16 to 18 (HLR) and Asn42 contribute to the substrate site. The Zn(2+) site is built by Lys100, His137, and His175. N6-carboxylysine is present on Lys100. Residue His137 coordinates substrate. Residue Leu220 coordinates substrate. Asp248 serves as a coordination point for Zn(2+). Asp248 is a catalytic residue. His252 and Ala264 together coordinate substrate.

This sequence belongs to the metallo-dependent hydrolases superfamily. DHOase family. Class II DHOase subfamily. Homodimer. Zn(2+) serves as cofactor.

The enzyme catalyses (S)-dihydroorotate + H2O = N-carbamoyl-L-aspartate + H(+). Its pathway is pyrimidine metabolism; UMP biosynthesis via de novo pathway; (S)-dihydroorotate from bicarbonate: step 3/3. Functionally, catalyzes the reversible cyclization of carbamoyl aspartate to dihydroorotate. The sequence is that of Dihydroorotase from Pseudomonas putida (strain ATCC 47054 / DSM 6125 / CFBP 8728 / NCIMB 11950 / KT2440).